The following is a 732-amino-acid chain: Non-structural protein 4 (732 aa).

Composition is skewed to polar residues over residues 13–23 (KNKGIQQNQWH) and 31–56 (LSGQ…NSKS). Disordered stretches follow at residues 13 to 74 (KNKG…NSAA) and 706 to 732 (LGRN…KQKE). Residues 719–732 (QVEEAENEEEKQKE) are compositionally biased toward acidic residues.

In Catharanthus roseus (Madagascar periwinkle), this protein is Non-structural protein 4.